The following is a 186-amino-acid chain: Nicotinamide-nucleotide adenylyltransferase (186 aa).

This sequence belongs to the archaeal NMN adenylyltransferase family.

It localises to the cytoplasm. The enzyme catalyses beta-nicotinamide D-ribonucleotide + ATP + H(+) = diphosphate + NAD(+). The protein operates within cofactor biosynthesis; NAD(+) biosynthesis; NAD(+) from nicotinamide D-ribonucleotide: step 1/1. The protein is Nicotinamide-nucleotide adenylyltransferase of Pyrococcus horikoshii (strain ATCC 700860 / DSM 12428 / JCM 9974 / NBRC 100139 / OT-3).